The following is a 342-amino-acid chain: Isopentenyl-diphosphate delta-isomerase (342 aa).

11 to 12 (RK) contributes to the substrate binding site. Residues Ser68, 69-71 (SMT), Ser99, and Asn128 contribute to the FMN site. Residue 99–101 (SQR) coordinates substrate. Gln162 serves as a coordination point for substrate. Residue Glu163 participates in Mg(2+) binding. FMN is bound by residues Lys194, Ser219, Thr224, 275–277 (GVR), and 296–297 (AK).

This sequence belongs to the IPP isomerase type 2 family. Homooctamer. Dimer of tetramers. FMN is required as a cofactor. Requires NADPH as cofactor. The cofactor is Mg(2+).

It localises to the cytoplasm. The enzyme catalyses isopentenyl diphosphate = dimethylallyl diphosphate. In terms of biological role, involved in the biosynthesis of isoprenoids. Catalyzes the 1,3-allylic rearrangement of the homoallylic substrate isopentenyl (IPP) to its allylic isomer, dimethylallyl diphosphate (DMAPP). This is Isopentenyl-diphosphate delta-isomerase from Legionella pneumophila (strain Corby).